We begin with the raw amino-acid sequence, 122 residues long: Ribosome-binding factor A (122 aa).

The protein belongs to the RbfA family. Monomer. Binds 30S ribosomal subunits, but not 50S ribosomal subunits or 70S ribosomes.

The protein resides in the cytoplasm. Its function is as follows. One of several proteins that assist in the late maturation steps of the functional core of the 30S ribosomal subunit. Associates with free 30S ribosomal subunits (but not with 30S subunits that are part of 70S ribosomes or polysomes). Required for efficient processing of 16S rRNA. May interact with the 5'-terminal helix region of 16S rRNA. The sequence is that of Ribosome-binding factor A from Prosthecochloris aestuarii (strain DSM 271 / SK 413).